The following is a 680-amino-acid chain: UvrABC system protein B (680 aa).

A Helicase ATP-binding domain is found at 27–192; the sequence is SNIEAGVTDQ…ERNDYDFHRG (166 aa). An ATP-binding site is contributed by 40–47; that stretch reads GVTGSGKT. Residues 93–116 carry the Beta-hairpin motif; the sequence is YYDYYQPEAYVPSSDTYIEKDSSI. In terms of domain architecture, Helicase C-terminal spans 432–594; it reads QVDDLLGECR…IVPATIRKAV (163 aa). Residues 637-672 enclose the UVR domain; the sequence is AKQIQQLERDMREAAKELEFERAAELRDRIRLLREH.

Belongs to the UvrB family. In terms of assembly, forms a heterotetramer with UvrA during the search for lesions. Interacts with UvrC in an incision complex.

The protein resides in the cytoplasm. The UvrABC repair system catalyzes the recognition and processing of DNA lesions. A damage recognition complex composed of 2 UvrA and 2 UvrB subunits scans DNA for abnormalities. Upon binding of the UvrA(2)B(2) complex to a putative damaged site, the DNA wraps around one UvrB monomer. DNA wrap is dependent on ATP binding by UvrB and probably causes local melting of the DNA helix, facilitating insertion of UvrB beta-hairpin between the DNA strands. Then UvrB probes one DNA strand for the presence of a lesion. If a lesion is found the UvrA subunits dissociate and the UvrB-DNA preincision complex is formed. This complex is subsequently bound by UvrC and the second UvrB is released. If no lesion is found, the DNA wraps around the other UvrB subunit that will check the other stand for damage. The sequence is that of UvrABC system protein B from Nitratidesulfovibrio vulgaris (strain DSM 19637 / Miyazaki F) (Desulfovibrio vulgaris).